An 820-amino-acid polypeptide reads, in one-letter code: Leucine--tRNA ligase (820 aa).

The short motif at 40–51 (PYPSGAGLHVGH) is the 'HIGH' region element. Positions 601–605 (KMSKS) match the 'KMSKS' region motif. Lysine 604 lines the ATP pocket.

This sequence belongs to the class-I aminoacyl-tRNA synthetase family.

It localises to the cytoplasm. It carries out the reaction tRNA(Leu) + L-leucine + ATP = L-leucyl-tRNA(Leu) + AMP + diphosphate. This Chlamydia caviae (strain ATCC VR-813 / DSM 19441 / 03DC25 / GPIC) (Chlamydophila caviae) protein is Leucine--tRNA ligase.